The chain runs to 93 residues: UPF0521 protein A (93 aa).

Positions 2 to 58 (SLKEVITSLKNDFHSINKEIDSMKENNEKQEDKIFQEIKKLKLEMELLRKDNLSFKT) form a coiled coil.

Belongs to the UPF0521 family.

The protein is UPF0521 protein A of Dictyostelium discoideum (Social amoeba).